We begin with the raw amino-acid sequence, 124 residues long: Hydrogenase maturation factor HypA (124 aa).

Histidine 2 contributes to the Ni(2+) binding site. The Zn(2+) site is built by cysteine 78, cysteine 81, cysteine 97, and cysteine 100.

Belongs to the HypA/HybF family.

Involved in the maturation of [NiFe] hydrogenases. Required for nickel insertion into the metal center of the hydrogenase. This Methanocaldococcus jannaschii (strain ATCC 43067 / DSM 2661 / JAL-1 / JCM 10045 / NBRC 100440) (Methanococcus jannaschii) protein is Hydrogenase maturation factor HypA.